A 91-amino-acid polypeptide reads, in one-letter code: YcgL domain-containing protein Sde_1339 (91 aa).

A YcgL domain is found at 1 to 85; it reads MIVDIYRSAK…PPESYMNEIP (85 aa). Positions 72–91 are disordered; sequence QMPPPPESYMNEIPNDKMPR.

The protein is YcgL domain-containing protein Sde_1339 of Saccharophagus degradans (strain 2-40 / ATCC 43961 / DSM 17024).